The primary structure comprises 141 residues: Hemoglobin subunit alpha-A (141 aa).

Residues 1–141 (VLSGPDKTNV…VGAVLTAKYR (141 aa)) enclose the Globin domain. An O2-binding site is contributed by His58. A heme b-binding site is contributed by His87.

It belongs to the globin family. In terms of assembly, heterotetramer of two alpha chains and two beta chains. As to expression, red blood cells.

Its function is as follows. Involved in oxygen transport from the lung to the various peripheral tissues. This is Hemoglobin subunit alpha-A (HBAA) from Rhea americana (Greater rhea).